The following is a 285-amino-acid chain: Chromatin modification-related protein YNG2 (285 aa).

A coiled-coil region spans residues 19 to 54 (LEVKHLLQELKNKDVQLQEARKRYQTKDNQIHKFIR). A compositionally biased stretch (polar residues) spans 138-165 (NGLSDNLSGTTTPRGHSASTPVADNAAN). The segment at 138–218 (NGLSDNLSGT…SRPNEGPGNN (81 aa)) is disordered. The span at 193–207 (MKSEDFEDKKYDNDS) shows a compositional bias: basic and acidic residues. The PHD-type zinc-finger motif lies at 225-276 (NLYCFCQRVSFGEMIGCDNDDCKFEWFHWSCVGITAPPKDDEIWYCPDCAPK). 8 residues coordinate Zn(2+): Cys228, Cys230, Cys241, Cys246, His252, Cys255, Cys270, and Cys273.

This sequence belongs to the ING family. In terms of assembly, interacts with H3K4me3 and to a lesser extent with H3K4me2. Component of the NuA4 histone acetyltransferase complex.

Its subcellular location is the nucleus. In terms of biological role, component of the NuA4 histone acetyltransferase complex which is involved in transcriptional activation of selected genes principally by acetylation of nucleosomal histone H4 and H2A. The NuA4 complex is also involved in DNA repair. Involved in cell cycle progression and meiosis. This chain is Chromatin modification-related protein YNG2 (YNG2), found in Debaryomyces hansenii (strain ATCC 36239 / CBS 767 / BCRC 21394 / JCM 1990 / NBRC 0083 / IGC 2968) (Yeast).